Reading from the N-terminus, the 458-residue chain is MYSMEQVVNLAKHRGFVFPGSEIYGGLANTWDYGPLGIELKNNVKKAWWKKFIQESPYNVGLDAAILMNPKTWIASGHVGNFNDPMIDCKKCKARHRADKLIEDALDAKGIEMVVDGLTFDQMADLMKEHEVKCPDCGSEEFTEIRQFNLMFKTFQGVTESSTNEIFLRPETAQGIFVNFKNVQRSMRKKLPFGIGQIGKSFRNEITPGNFTFRTREFEQMELEFFCKPGEDLEWFAFWRETCKNWLLSLGMTEESMRLRDHGEEELSHYSNATTDIEFKFPFGWGELWGVASRTDFDLKRHMEHSNEDFNYIDPQTNERYVPYCIEPSLGADRVTLAFLCDAYEEEQLENDSRTVLRFHPALAPYKAAILPLSKKLSEGATEVFAELAKDFMVDFDETGSIGKRYRRQDEIGTPFCITYDFDSVEDKAVTVRDRDTMEQVRMPISELKGFLEKKIQF.

Arginine 97 and glutamate 171 together coordinate substrate. Residues 203 to 205 (RNE), 213 to 218 (FRTREF), 287 to 288 (EL), and 331 to 334 (GADR) contribute to the ATP site. 218-222 (FEQME) provides a ligand contact to substrate. 327 to 331 (EPSLG) lines the substrate pocket.

It belongs to the class-II aminoacyl-tRNA synthetase family. In terms of assembly, homodimer.

Its subcellular location is the cytoplasm. It catalyses the reaction tRNA(Gly) + glycine + ATP = glycyl-tRNA(Gly) + AMP + diphosphate. Catalyzes the attachment of glycine to tRNA(Gly). The sequence is that of Glycine--tRNA ligase from Bacillus anthracis.